A 344-amino-acid polypeptide reads, in one-letter code: Autoinducer 2 import system permease protein LsrC (344 aa).

A run of 9 helical transmembrane segments spans residues 13–33, 38–58, 69–89, 90–110, 114–134, 155–175, 212–232, 251–271, and 283–303; these read FFAI…YFIL, MIFA…LVML, TVGL…GLAT, AIAF…LLVV, IPAI…MLLW, FIGV…GGWL, LNGM…GFVP, GISL…AFFL, and LPAW…LVLD. Residues 323–344 are disordered; that stretch reads QPGNKGSKQVARFPERKSKEVA. Over residues 335-344 the composition is skewed to basic and acidic residues; the sequence is FPERKSKEVA.

Belongs to the binding-protein-dependent transport system permease family. AraH/RbsC subfamily. As to quaternary structure, the complex is composed of two ATP-binding proteins (LsrA), two transmembrane proteins (LsrC and LsrD) and a solute-binding protein (LsrB).

The protein localises to the cell inner membrane. Its function is as follows. Part of the ABC transporter complex LsrABCD involved in autoinducer 2 (AI-2) import. Probably responsible for the translocation of the substrate across the membrane. The polypeptide is Autoinducer 2 import system permease protein LsrC (lsrC) (Klebsiella pneumoniae subsp. pneumoniae (strain ATCC 700721 / MGH 78578)).